The chain runs to 518 residues: 3-phosphoshikimate 1-carboxyvinyltransferase 1, chloroplastic (518 aa).

Residues 1 to 74 (MAQISSMGQG…RISASVVTAQ (74 aa)) constitute a chloroplast transit peptide. 3-phosphoshikimate-binding residues include Lys97, Ser98, and Arg102. Lys97 contributes to the phosphoenolpyruvate binding site. Positions 175 and 205 each coordinate phosphoenolpyruvate. 3-phosphoshikimate contacts are provided by Ser252, Ser253, Gln254, Ser280, Asp405, and Lys432. Position 254 (Gln254) interacts with phosphoenolpyruvate. Asp405 acts as the Proton acceptor in catalysis. The phosphoenolpyruvate site is built by Arg436, Arg478, and Lys503.

Belongs to the EPSP synthase family.

Its subcellular location is the plastid. It localises to the chloroplast. It carries out the reaction 3-phosphoshikimate + phosphoenolpyruvate = 5-O-(1-carboxyvinyl)-3-phosphoshikimate + phosphate. Its pathway is metabolic intermediate biosynthesis; chorismate biosynthesis; chorismate from D-erythrose 4-phosphate and phosphoenolpyruvate: step 6/7. In terms of biological role, catalyzes the transfer of the enolpyruvyl moiety of phosphoenolpyruvate (PEP) to the 5-hydroxyl of shikimate-3-phosphate (S3P) to produce enolpyruvyl shikimate-3-phosphate and inorganic phosphate. This Nicotiana tabacum (Common tobacco) protein is 3-phosphoshikimate 1-carboxyvinyltransferase 1, chloroplastic (EPSPS-1).